Reading from the N-terminus, the 2375-residue chain is Talin-2 (2375 aa).

Residues 88 to 406 (RPQKIRMLDG…GYIDIILKKK (319 aa)) enclose the FERM domain. The interaction with PIP5K1C stretch occupies residues 312 to 406 (GVSFFLVKEK…GYIDIILKKK (95 aa)). Residues Ser-428, Ser-450, Ser-624, and Ser-1024 each carry the phosphoserine modification. Phosphotyrosine is present on Tyr-1666. The I/LWEQ domain occupies 2205 to 2375 (TEWVDPEDPT…KRLQAAGNAV (171 aa)).

Interacts directly with PIP5K1C.

It is found in the cytoplasm. The protein localises to the cell junction. Its subcellular location is the focal adhesion. It localises to the synapse. The protein resides in the cell membrane. It is found in the cytoskeleton. Functionally, as a major component of focal adhesion plaques that links integrin to the actin cytoskeleton, may play an important role in cell adhesion. Recruits PIP5K1C to focal adhesion plaques and strongly activates its kinase activity. This is Talin-2 (Tln2) from Mus musculus (Mouse).